The chain runs to 393 residues: Protein TsgA (393 aa).

Topologically, residues 1 to 10 (MTNSNRIKLT) are cytoplasmic. The chain crosses the membrane as a helical span at residues 11 to 31 (WISFLSYALTGALVIVTGMVM). Over 32–50 (GNIADYFHLPVSSMSNTFT) the chain is Periplasmic. The helical transmembrane segment at 51–71 (FLNAGILISIFLNAWLMEIIP) threads the bilayer. Over 72 to 77 (LKTQLR) the chain is Cytoplasmic. Residues 78–98 (FGFILMVLAVAGLMFGHSLAL) form a helical membrane-spanning segment. At 99-100 (FS) the chain is on the periplasmic side. Residues 101-121 (AAMFVLGLVSGITMSIGTFLI) form a helical membrane-spanning segment. Residues 122–133 (TQLYEGRQRGSR) lie on the Cytoplasmic side of the membrane. A helical transmembrane segment spans residues 134 to 154 (LLFTDSFFSMAGMIFPMVAAF). The Periplasmic portion of the chain corresponds to 155–161 (LLARSIE). The chain crosses the membrane as a helical span at residues 162–182 (WYWVYACIGLVYLAIFILTFG). Topologically, residues 183-205 (CEFPALGKHAQHSQAPVVKEKWG) are cytoplasmic. Residues 206–226 (IGVLFLAVAALCYILGQLGFI) traverse the membrane as a helical segment. Topologically, residues 227-244 (SWVPEYAKGLGMSLNDAG) are periplasmic. Residues 245-265 (ALVSDFWMSYMFGMWAFSFIL) traverse the membrane as a helical segment. Topologically, residues 266 to 272 (RFFDLQR) are cytoplasmic. The helical transmembrane segment at 273 to 293 (ILTVLAGMAAVLMYLFITGTQ) threads the bilayer. Topologically, residues 294–297 (AHMP) are periplasmic. A helical transmembrane segment spans residues 298–318 (WFILTLGFFSSAIYTSIITLG). Residues 319 to 331 (SQQTKVASPKLVN) lie on the Cytoplasmic side of the membrane. A helical transmembrane segment spans residues 332-352 (FILTCGTIGTMLTFVVTGPIV). The Periplasmic segment spans residues 353-360 (AHSGPQAA). A helical transmembrane segment spans residues 361 to 381 (LLTANGLYAVVFVMCFALGFV). Residues 382-393 (SRHRQHSAPATH) lie on the Cytoplasmic side of the membrane.

The protein belongs to the major facilitator superfamily. TsgA family.

Its subcellular location is the cell inner membrane. The chain is Protein TsgA from Salmonella choleraesuis (strain SC-B67).